The primary structure comprises 278 residues: 4-hydroxy-3-methylbut-2-enyl diphosphate reductase (278 aa).

A [4Fe-4S] cluster-binding site is contributed by cysteine 12. (2E)-4-hydroxy-3-methylbut-2-enyl diphosphate is bound by residues histidine 36 and histidine 70. Residues histidine 36 and histidine 70 each contribute to the dimethylallyl diphosphate site. The isopentenyl diphosphate site is built by histidine 36 and histidine 70. A [4Fe-4S] cluster-binding site is contributed by cysteine 92. Position 120 (histidine 120) interacts with (2E)-4-hydroxy-3-methylbut-2-enyl diphosphate. Dimethylallyl diphosphate is bound at residue histidine 120. Histidine 120 provides a ligand contact to isopentenyl diphosphate. Glutamate 122 (proton donor) is an active-site residue. Residue threonine 158 participates in (2E)-4-hydroxy-3-methylbut-2-enyl diphosphate binding. Cysteine 186 is a [4Fe-4S] cluster binding site. Residues serine 214, asparagine 216, and serine 258 each coordinate (2E)-4-hydroxy-3-methylbut-2-enyl diphosphate. Positions 214, 216, and 258 each coordinate dimethylallyl diphosphate. 3 residues coordinate isopentenyl diphosphate: serine 214, asparagine 216, and serine 258.

This sequence belongs to the IspH family. [4Fe-4S] cluster is required as a cofactor.

The catalysed reaction is isopentenyl diphosphate + 2 oxidized [2Fe-2S]-[ferredoxin] + H2O = (2E)-4-hydroxy-3-methylbut-2-enyl diphosphate + 2 reduced [2Fe-2S]-[ferredoxin] + 2 H(+). The enzyme catalyses dimethylallyl diphosphate + 2 oxidized [2Fe-2S]-[ferredoxin] + H2O = (2E)-4-hydroxy-3-methylbut-2-enyl diphosphate + 2 reduced [2Fe-2S]-[ferredoxin] + 2 H(+). Its pathway is isoprenoid biosynthesis; dimethylallyl diphosphate biosynthesis; dimethylallyl diphosphate from (2E)-4-hydroxy-3-methylbutenyl diphosphate: step 1/1. The protein operates within isoprenoid biosynthesis; isopentenyl diphosphate biosynthesis via DXP pathway; isopentenyl diphosphate from 1-deoxy-D-xylulose 5-phosphate: step 6/6. Its function is as follows. Catalyzes the conversion of 1-hydroxy-2-methyl-2-(E)-butenyl 4-diphosphate (HMBPP) into a mixture of isopentenyl diphosphate (IPP) and dimethylallyl diphosphate (DMAPP). Acts in the terminal step of the DOXP/MEP pathway for isoprenoid precursor biosynthesis. This Campylobacter lari (strain RM2100 / D67 / ATCC BAA-1060) protein is 4-hydroxy-3-methylbut-2-enyl diphosphate reductase.